The chain runs to 497 residues: Probable malate:quinone oxidoreductase (497 aa).

Belongs to the MQO family. The cofactor is FAD.

It catalyses the reaction (S)-malate + a quinone = a quinol + oxaloacetate. Its pathway is carbohydrate metabolism; tricarboxylic acid cycle; oxaloacetate from (S)-malate (quinone route): step 1/1. The sequence is that of Probable malate:quinone oxidoreductase from Wolinella succinogenes (strain ATCC 29543 / DSM 1740 / CCUG 13145 / JCM 31913 / LMG 7466 / NCTC 11488 / FDC 602W) (Vibrio succinogenes).